The primary structure comprises 340 residues: 3-hydroxybenzoate synthase (340 aa).

Residues Y147, R154, Y207, and R220 each coordinate substrate. E334 serves as the catalytic Proton acceptor.

The protein belongs to the FkbO/Hyg5 family. In terms of assembly, trimer.

The catalysed reaction is chorismate = 3-hydroxybenzoate + pyruvate. Functionally, involved in the biosynthesis of BC325, a rapamycin analog containing a 3-hydroxybenzoate starter unit. Catalyzes the hydrolysis of chorismate via an intramolecular mechanism to yield 3-hydroxybenzoate (3HBA). The sequence is that of 3-hydroxybenzoate synthase from Streptomyces hygroscopicus.